The chain runs to 1213 residues: DNA-directed RNA polymerase subunit beta' (1213 aa).

Zn(2+) contacts are provided by cysteine 60, cysteine 62, cysteine 75, and cysteine 78. Aspartate 450, aspartate 452, and aspartate 454 together coordinate Mg(2+). Positions 819, 893, 900, and 903 each coordinate Zn(2+).

This sequence belongs to the RNA polymerase beta' chain family. As to quaternary structure, the RNAP catalytic core consists of 2 alpha, 1 beta, 1 beta' and 1 omega subunit. When a sigma factor is associated with the core the holoenzyme is formed, which can initiate transcription. Mg(2+) is required as a cofactor. It depends on Zn(2+) as a cofactor.

The enzyme catalyses RNA(n) + a ribonucleoside 5'-triphosphate = RNA(n+1) + diphosphate. Functionally, DNA-dependent RNA polymerase catalyzes the transcription of DNA into RNA using the four ribonucleoside triphosphates as substrates. The sequence is that of DNA-directed RNA polymerase subunit beta' from Streptococcus pyogenes serotype M4 (strain MGAS10750).